A 319-amino-acid polypeptide reads, in one-letter code: Methyltransferase tpcM (319 aa).

The tract at residues 63–155 (DVGAGIGPYA…QLRPGGTFAC (93 aa)) is methyltransferase domain.

This sequence belongs to the methyltransferase superfamily. As to expression, specifically expressed in conidia.

It functions in the pathway secondary metabolite biosynthesis. Methyltransferase; part of the gene cluster that mediates the biosynthesis of trypacidin, a mycotoxin with antiprotozoal activity and that plays a role in the infection process. The pathway begins with the synthesis of atrochrysone thioester by the polyketide synthase (PKS) tpcC. The atrochrysone carboxyl ACP thioesterase tpcB then breaks the thioester bond and releases the atrochrysone carboxylic acid from tpcC. The decarboxylase tpcK converts atrochrysone carboxylic acid to atrochrysone which is further reduced into emodin anthrone. The next step is performed by the emodin anthrone oxygenase tpcL that catalyzes the oxidation of emodinanthrone to emodin. Emodin O-methyltransferase encoded by tpcA catalyzes methylation of the 8-hydroxy group of emodin to form questin. Ring cleavage of questin by questin oxidase tpcI leads to desmethylsulochrin via several intermediates including questin epoxide. Another methylation step catalyzed by tpcM leads to the formation of sulochrin which is further converted to monomethylsulfochrin by tpcH. Finally, the tpcJ catalyzes the conversion of monomethylsulfochrin to trypacidin. Trypacidin is toxic for human pulmonary and bronchial epithelial cells by initiating the intracellular formation of nitric oxide (NO) and hydrogen peroxide (H(2)O(2)), thus triggering host necrotic cell death. The trypacidin pathway is also able to produce endocrocin via a distinct route from the endocrocin Enc pathway. The sequence is that of Methyltransferase tpcM from Aspergillus fumigatus (strain ATCC MYA-4609 / CBS 101355 / FGSC A1100 / Af293) (Neosartorya fumigata).